We begin with the raw amino-acid sequence, 624 residues long: Coagulation factor XI (624 aa).

The signal sequence occupies residues 1–18 (MTSLHQVLYFIFFASVSS). Apple domains are found at residues 20 to 103 (CVTK…FKQC), 110 to 193 (CSKD…LKSC), 200 to 283 (CIRD…LQHC), and 291 to 376 (CHPS…LRLC). 17 disulfides stabilise this stretch: Cys-20–Cys-103, Cys-46–Cys-76, Cys-50–Cys-56, Cys-110–Cys-193, Cys-136–Cys-165, Cys-140–Cys-146, Cys-200–Cys-283, Cys-226–Cys-255, Cys-230–Cys-236, Cys-291–Cys-376, Cys-317–Cys-348, Cys-321–Cys-327, Cys-382–Cys-499, Cys-415–Cys-431, Cys-513–Cys-580, Cys-544–Cys-559, and Cys-570–Cys-598. 2 N-linked (GlcNAc...) asparagine glycosylation sites follow: Asn-90 and Asn-126. Asn-297 carries an N-linked (GlcNAc...) asparagine glycan. One can recognise a Peptidase S1 domain in the interval 390 to 622 (VVGGAASVHG…YVDWILEKTQ (233 aa)). The active-site Charge relay system is the His-430. N-linked (GlcNAc...) asparagine glycosylation occurs at Asn-449. Asp-479 serves as the catalytic Charge relay system. N-linked (GlcNAc...) asparagine glycosylation is present at Asn-490. Position 547–550 (547–550 (RYRR)) interacts with heparin. Ser-574 serves as the catalytic Charge relay system.

Belongs to the peptidase S1 family. Plasma kallikrein subfamily. As to quaternary structure, homodimer; disulfide-linked. After activation the heavy and light chains are also linked by a disulfide bond. Interacts (activated) with F9 (inactive and activated) in calcium-dependent manner. Forms a heterodimer with SERPINA5. Post-translationally, activated by factor XIIa (or XII), which cleaves each polypeptide after Arg-389 into the light chain, which contains the active site, and the heavy chain, which associates with high molecular weight (HMW) kininogen. Activated by F12 (activated); the presence of negatively charged surfaces accelerates activation. Activated by F2 (thrombin); the presence of negatively charged surfaces, such as polyphosphate and dextran sulfate, strongly accelerates activation. Autoactivated; the presence of negatively charged surfaces, such as polyphosphate and dextran sulfate, accelerates autoactivation and autolysis. N-glycosylated on both chains. N-glycosylated sites mainly consist of nonfucosylated sialylated biantennary (in high abundance) and/or triantennary (in low abundance) complex structures.

Its subcellular location is the secreted. It catalyses the reaction Selective cleavage of Arg-|-Ala and Arg-|-Val bonds in factor IX to form factor IXa.. Its activity is regulated as follows. Inhibited by SERPINA5. Functionally, factor XI triggers the middle phase of the intrinsic pathway of blood coagulation by activating factor IX. In Mus musculus (Mouse), this protein is Coagulation factor XI (F11).